The primary structure comprises 101 residues: Small ribosomal subunit protein uS14 (101 aa).

The disordered stretch occupies residues 33–69 (SQDASYEEKIDASTKLQKLPRDSSPSRHRNRCELSGR). Over residues 51 to 68 (LPRDSSPSRHRNRCELSG) the composition is skewed to basic and acidic residues.

Belongs to the universal ribosomal protein uS14 family. In terms of assembly, part of the 30S ribosomal subunit. Contacts proteins S3 and S10.

Its function is as follows. Binds 16S rRNA, required for the assembly of 30S particles and may also be responsible for determining the conformation of the 16S rRNA at the A site. This is Small ribosomal subunit protein uS14 from Xanthomonas axonopodis pv. citri (strain 306).